The sequence spans 372 residues: Heterogeneous nuclear rnp K-like protein 2 (372 aa).

The span at 1 to 23 shows a compositional bias: polar residues; that stretch reads MSDINDPNSISLPVGSSCTSRGA. The interval 1 to 49 is disordered; sequence MSDINDPNSISLPVGSSCTSRGASTETFTTSRSTTLFSSQQESKDEGNV. The span at 24–39 shows a compositional bias: low complexity; sequence STETFTTSRSTTLFSS. 3 consecutive KH domains span residues 59 to 123, 167 to 232, and 283 to 354; these read TINH…LGQI, IGTS…LLQI, and EFKA…ESML.

Belongs to the HEK2 family. As to quaternary structure, binds RNA.

It localises to the cytoplasm. Its subcellular location is the P-body. The protein localises to the nucleus. The protein resides in the chromosome. It is found in the telomere. RNA-binding protein involved in the correct localization of transcripts in the cell. RNA localization is a widespread mechanism for achieving localized protein synthesis. Involved in structural and functional organization of telomeric chromatin and regulates silencing at the HMR locus. This Zygosaccharomyces rouxii (strain ATCC 2623 / CBS 732 / NBRC 1130 / NCYC 568 / NRRL Y-229) protein is Heterogeneous nuclear rnp K-like protein 2 (HEK2).